Reading from the N-terminus, the 220-residue chain is Uracil-DNA glycosylase (220 aa).

Aspartate 65 (proton acceptor) is an active-site residue.

The protein belongs to the uracil-DNA glycosylase (UDG) superfamily. UNG family.

The protein resides in the cytoplasm. It catalyses the reaction Hydrolyzes single-stranded DNA or mismatched double-stranded DNA and polynucleotides, releasing free uracil.. Excises uracil residues from the DNA which can arise as a result of misincorporation of dUMP residues by DNA polymerase or due to deamination of cytosine. This Amoebophilus asiaticus (strain 5a2) protein is Uracil-DNA glycosylase.